Reading from the N-terminus, the 105-residue chain is MLNWDLQKNNDKITLFLFGELSRSTLLPMWQQRGVFLSASTLDKTIVEWNLSDLQHIDSAGFAALCDFLRECQKLNKTVRLVYPPKQLLTLADLFGLSDWIANFI.

Positions 4–105 constitute an STAS domain; the sequence is WDLQKNNDKI…GLSDWIANFI (102 aa).

In terms of assembly, the complex is composed of two ATP-binding proteins (MlaF), two transmembrane proteins (MlaE), two cytoplasmic solute-binding proteins (MlaB) and six periplasmic solute-binding proteins (MlaD).

The protein localises to the cytoplasm. Functionally, part of the ABC transporter complex MlaFEDB, which is involved in a phospholipid transport pathway that maintains lipid asymmetry in the outer membrane by retrograde trafficking of phospholipids from the outer membrane to the inner membrane. MlaB plays critical roles in both the assembly and activity of the complex. May act by modulating MlaF structure and stability. This Haemophilus influenzae (strain ATCC 51907 / DSM 11121 / KW20 / Rd) protein is Intermembrane phospholipid transport system binding protein MlaB.